Reading from the N-terminus, the 403-residue chain is Lipase lipl-5 (403 aa).

A signal peptide spans Met1–Gly18. N-linked (GlcNAc...) asparagine glycosylation occurs at Asn64. Ser167 functions as the Nucleophile in the catalytic mechanism. An N-linked (GlcNAc...) asparagine glycan is attached at Asn271. Catalysis depends on charge relay system residues Asp343 and His375.

This sequence belongs to the AB hydrolase superfamily. Lipase family.

The protein resides in the lysosome lumen. It is found in the secreted. Lipase involved in lipid homeostasis. Regulates mitochondrial lipid composition, in particular cardiolipins and coenzyme Q-9 levels, in response to nutrient availability. Does not affect global triglyceride levels in response to nutrient availability. However, in coelomocytes, specifically promotes triglyceride catabolism and lifespan extension in response to nutrient deprivation. The chain is Lipase lipl-5 from Caenorhabditis elegans.